The sequence spans 472 residues: Protein DML1 (472 aa).

The segment covering 441 to 463 (GDEREEMKQELGDMASKYEHGWE) has biased composition (basic and acidic residues). The interval 441–472 (GDEREEMKQELGDMASKYEHGWEEESDDDDDY) is disordered.

Belongs to the misato family.

The protein localises to the mitochondrion. In terms of biological role, involved in the partitioning of the mitochondrial organelle and mitochondrial DNA (mtDNA) inheritance. The chain is Protein DML1 (DML1) from Yarrowia lipolytica (strain CLIB 122 / E 150) (Yeast).